Reading from the N-terminus, the 287-residue chain is MADVIDAVFDAIADAAPEVRAGLPDHRATRDDQNASGDTQLEADVWADDLLFDRTESIEGVNWYASEERDAVVTVGDAEGGYAVALDPLDGSSNVKSNNPCGTVVGIYDQPLPAPGSSLVAAGFVLYGPTTTMVVARDDTVRESLVSETGATTDLGPVELPADPTVYGFGGRVPDWTPAFESFVRDVEDDLKLRYGGAMIADVNQVLVYGGVFGYPGMESAPDGKLRAQFEALPIAYIVETAGGASSDGTQSLLDVAPTRLHERTPTFVGTDDVIAALDAALPDHTN.

Mg(2+) is bound by residues Glu-67, Asp-87, Leu-89, and Asp-90. Residues 90–93 (DGSS), Tyr-195, and Lys-225 each bind substrate. A Mg(2+)-binding site is contributed by Glu-231.

The protein belongs to the FBPase class 1 family. As to quaternary structure, homotetramer. It depends on Mg(2+) as a cofactor.

It localises to the cytoplasm. It carries out the reaction beta-D-fructose 1,6-bisphosphate + H2O = beta-D-fructose 6-phosphate + phosphate. Its pathway is carbohydrate biosynthesis; gluconeogenesis. This chain is Fructose-1,6-bisphosphatase class 1, found in Halobacterium salinarum (strain ATCC 29341 / DSM 671 / R1).